The primary structure comprises 789 residues: Isoamylase SU1, chloroplastic (789 aa).

A chloroplast-targeting transit peptide spans 1-44 (MAQQLPCVSSPRPLLAVPAGRWRAGVRGRPNVAGLGRGRLSLHA). Asp417 functions as the Nucleophile in the catalytic mechanism. Residue Glu473 is the Proton donor of the active site.

This sequence belongs to the glycosyl hydrolase 13 family.

The protein localises to the plastid. It is found in the chloroplast. It carries out the reaction Hydrolysis of (1-&gt;6)-alpha-D-glucosidic branch linkages in glycogen, amylopectin and their beta-limit dextrins.. Its pathway is glycan biosynthesis; starch biosynthesis. In terms of biological role, isoamylase starch-debranching enzyme involved in amylopectin biosynthesis in endosperm. Functions by removing excess branches or improper branches that interfere with the formation of double helices of the cluster chains of amylopectin and crystallization of starch. This Zea mays (Maize) protein is Isoamylase SU1, chloroplastic.